A 390-amino-acid chain; its full sequence is MGIHQLMQFLKEKAPNCFRTLMLDYFAGRTIGCDASMAMYQFLIQTQSAGLTQIIELTDKEGNRTGHLVGLFNRTLQFLENGIKPVWVFDGKPPLLKSGELARRKKLKEEAKVKTELALEQGDMQQALLQNQRTTTISSIMKEDAIKMLQLMGCPVIIAPCEAEAQCAELCRAGKIYATATEDMDALTFRTPVLLRGFNTKKEPIYEIIYDDMIKELELTYEQFVDLCILCGCDYTEKIEGIGPGTAYKLIKEYKSIEGILEHVQKVNAEREKNNQNPKYTVPSKFLYQDSRELFITPLVQKGDELQLTWNKPDVDNLKKFLIEEKGFAESRIDNGLKRIAKKDPAGFQSRLENFFGKTTKIIHPNNSKAKAKSNKKTEQPQKSGGKKKI.

The N-domain stretch occupies residues 1–108; that stretch reads MGIHQLMQFL…GELARRKKLK (108 aa). Mg(2+) is bound at residue aspartate 34. Arginine 74 contributes to the DNA binding site. Mg(2+) is bound by residues aspartate 90, glutamate 162, glutamate 164, aspartate 183, and aspartate 185. The segment at 126–254 is I-domain; that stretch reads QALLQNQRTT…GTAYKLIKEY (129 aa). Residue glutamate 162 coordinates DNA. Positions 232 and 234 each coordinate DNA. Aspartate 234 lines the Mg(2+) pocket. The interaction with PCNA stretch occupies residues 348-356; it reads FQSRLENFF. Residues 359–390 form a disordered region; sequence TTKIIHPNNSKAKAKSNKKTEQPQKSGGKKKI.

The protein belongs to the XPG/RAD2 endonuclease family. FEN1 subfamily. As to quaternary structure, interacts with PCNA. Three molecules of FEN1 bind to one PCNA trimer with each molecule binding to one PCNA monomer. PCNA stimulates the nuclease activity without altering cleavage specificity. The cofactor is Mg(2+). Post-translationally, phosphorylated. Phosphorylation upon DNA damage induces relocalization to the nuclear plasma.

It is found in the nucleus. The protein localises to the nucleolus. The protein resides in the nucleoplasm. It localises to the mitochondrion. Structure-specific nuclease with 5'-flap endonuclease and 5'-3' exonuclease activities involved in DNA replication and repair. During DNA replication, cleaves the 5'-overhanging flap structure that is generated by displacement synthesis when DNA polymerase encounters the 5'-end of a downstream Okazaki fragment. It enters the flap from the 5'-end and then tracks to cleave the flap base, leaving a nick for ligation. Also involved in the long patch base excision repair (LP-BER) pathway, by cleaving within the apurinic/apyrimidinic (AP) site-terminated flap. Acts as a genome stabilization factor that prevents flaps from equilibrating into structures that lead to duplications and deletions. Also possesses 5'-3' exonuclease activity on nicked or gapped double-stranded DNA, and exhibits RNase H activity. Also involved in replication and repair of rDNA and in repairing mitochondrial DNA. The sequence is that of Flap endonuclease 1-2 from Paramecium tetraurelia.